The primary structure comprises 470 residues: Uronate isomerase (470 aa).

It belongs to the metallo-dependent hydrolases superfamily. Uronate isomerase family.

It carries out the reaction D-glucuronate = D-fructuronate. The catalysed reaction is aldehydo-D-galacturonate = keto-D-tagaturonate. It functions in the pathway carbohydrate metabolism; pentose and glucuronate interconversion. The chain is Uronate isomerase from Vibrio vulnificus (strain CMCP6).